The chain runs to 142 residues: Ribosome-binding factor A (142 aa).

Residues 118 to 130 show a composition bias toward basic and acidic residues; the sequence is DKAKQKQAGREDD. The interval 118–142 is disordered; it reads DKAKQKQAGREDDTPSVDEQEKDTD. A compositionally biased stretch (acidic residues) spans 131–142; the sequence is TPSVDEQEKDTD.

Belongs to the RbfA family. As to quaternary structure, monomer. Binds 30S ribosomal subunits, but not 50S ribosomal subunits or 70S ribosomes.

It is found in the cytoplasm. Functionally, one of several proteins that assist in the late maturation steps of the functional core of the 30S ribosomal subunit. Associates with free 30S ribosomal subunits (but not with 30S subunits that are part of 70S ribosomes or polysomes). Required for efficient processing of 16S rRNA. May interact with the 5'-terminal helix region of 16S rRNA. In Shewanella denitrificans (strain OS217 / ATCC BAA-1090 / DSM 15013), this protein is Ribosome-binding factor A.